The primary structure comprises 318 residues: Nisin-resistance protein (318 aa).

Residues 7–28 form a helical membrane-spanning segment; that stretch reads ILLGLVAVCALFLGIIYLWGYK.

The protein localises to the cell membrane. This is Nisin-resistance protein (nsr) from Lactococcus lactis subsp. lactis (Streptococcus lactis).